The primary structure comprises 461 residues: Cysteine--tRNA ligase (461 aa).

Residue cysteine 28 participates in Zn(2+) binding. Residues 30 to 40 carry the 'HIGH' region motif; it reads ITIYDLCHIGH. Zn(2+)-binding residues include cysteine 209, histidine 234, and glutamate 238. The 'KMSKS' region motif lies at 266–270; it reads KMSKS. Lysine 269 contacts ATP.

Belongs to the class-I aminoacyl-tRNA synthetase family. As to quaternary structure, monomer. It depends on Zn(2+) as a cofactor.

The protein resides in the cytoplasm. It carries out the reaction tRNA(Cys) + L-cysteine + ATP = L-cysteinyl-tRNA(Cys) + AMP + diphosphate. The sequence is that of Cysteine--tRNA ligase from Yersinia enterocolitica serotype O:8 / biotype 1B (strain NCTC 13174 / 8081).